The sequence spans 318 residues: NADH-ubiquinone oxidoreductase chain 1 (318 aa).

A run of 8 helical transmembrane segments spans residues 2–22 (FMIN…FLTL), 70–90 (MFIL…IPLP), 100–120 (LGVL…LWSG), 147–167 (AIIL…TLII), 172–192 (TWLI…TLAE), 222–242 (LFFM…AILF), 253–273 (ELYT…FLWI), and 294–314 (LPLT…TSGI).

The protein belongs to the complex I subunit 1 family. Core subunit of respiratory chain NADH dehydrogenase (Complex I) which is composed of 45 different subunits.

The protein localises to the mitochondrion inner membrane. The enzyme catalyses a ubiquinone + NADH + 5 H(+)(in) = a ubiquinol + NAD(+) + 4 H(+)(out). In terms of biological role, core subunit of the mitochondrial membrane respiratory chain NADH dehydrogenase (Complex I) which catalyzes electron transfer from NADH through the respiratory chain, using ubiquinone as an electron acceptor. Essential for the catalytic activity and assembly of complex I. This Bos mutus grunniens (Wild yak) protein is NADH-ubiquinone oxidoreductase chain 1 (MT-ND1).